The sequence spans 406 residues: Tryptophan 2,3-dioxygenase (406 aa).

Position 19 is a phosphoserine (S19). Residues F72–H76 and R144 contribute to the substrate site. H328 is a heme binding site. T342 provides a ligand contact to substrate.

This sequence belongs to the tryptophan 2,3-dioxygenase family. Homotetramer. Dimer of dimers. Heme is required as a cofactor.

It catalyses the reaction L-tryptophan + O2 = N-formyl-L-kynurenine. Its pathway is amino-acid degradation; L-tryptophan degradation via kynurenine pathway; L-kynurenine from L-tryptophan: step 1/2. Its function is as follows. Heme-dependent dioxygenase that catalyzes the oxidative cleavage of the L-tryptophan (L-Trp) pyrrole ring and converts L-tryptophan to N-formyl-L-kynurenine. Catalyzes the oxidative cleavage of the indole moiety. The sequence is that of Tryptophan 2,3-dioxygenase from Bos taurus (Bovine).